The sequence spans 404 residues: Zinc metalloprotease Rip1 (404 aa).

Residues 1–21 (MMFVTGIVLFALAILISVALH) traverse the membrane as a helical segment. H21 is a Zn(2+) binding site. Residue E22 is part of the active site. H25 is a binding site for Zn(2+). Residues 104 to 124 (PGMNLAICLVLIYAIALVWGL) traverse the membrane as a helical segment. In terms of domain architecture, PDZ spans 121–203 (VWGLPNLHPP…SVPIVVERDG (83 aa)). Zn(2+) is bound at residue D202. The next 2 helical transmembrane spans lie at 313–333 (LWVA…TINL) and 373–393 (LLPA…LTVT).

It belongs to the peptidase M50B family. Zn(2+) is required as a cofactor.

The protein resides in the cell membrane. A probable intramembrane site-2 protease (S2P) that cleaves type-2 transmembrane proteins within their membrane-spanning domains. Cleaves PbpB (PBP3, FtsI); cleavage is inhibited by Wag31-PbpB interaction. Probably also cleaves anti-sigma factors RskA, RslA and RsmA. Its function is as follows. Regulated intramembrane proteolysis (RIP) occurs when an extracytoplasmic signal (possibly oxidative stress) triggers a concerted proteolytic cascade to transmit information and elicit cellular responses. The membrane-spanning regulatory substrate protein (includes anti-sigma factors RskA, RslA, RsmA, and PbpB in M.tuberculosis) is first cut extracytoplasmically (site-1 protease, S1P), then within the membrane itself (site-2 protease, S2P, this entry), while cytoplasmic proteases finish degrading the regulatory protein, liberating the effector protein (ECF sigma factors SigK, SigL and SigM). The chain is Zinc metalloprotease Rip1 (rip1) from Mycobacterium bovis (strain BCG / Pasteur 1173P2).